A 143-amino-acid polypeptide reads, in one-letter code: FAM161 homolog famh-136 (143 aa).

The protein belongs to the FAM136 family.

The protein resides in the cytoplasm. In terms of biological role, may play a role in locomotion and behavior. The chain is FAM161 homolog famh-136 from Caenorhabditis elegans.